Consider the following 890-residue polypeptide: Major vault protein (890 aa).

MVP repeat units follow at residues 2–56 (SMEE…VPPR), 57–111 (HYCM…DITP), 112–164 (LQVV…EIIQ), 165–217 (ATVI…DVVD), 218–272 (AVIL…GVVS), 273–323 (VTTL…IQNV), 324–379 (YVLS…ERQA), 380–457 (IPLD…KTRV), and 458–520 (VSYR…LLGP). Residues 425–455 (ELLNKGQDPLADRGEKETSKTPKLSTPRNKT) are disordered. Positions 434-444 (LADRGEKETSK) are enriched in basic and acidic residues. A Glycyl lysine isopeptide (Lys-Gly) (interchain with G-Cter in SUMO2) cross-link involves residue Lys-444.

In terms of assembly, the vault ribonucleoprotein particle is a huge (400 A x 670 A) cage structure of 12.9 MDa. It consists of a dimer of half-vaults, with each half-vault comprising 39 identical major vault protein (MVP) chains, PARP4 and one or more vault RNAs (vRNAs). Interacts with TEP1. Interacts with PTEN and activated MAPK1. The phosphorylated protein interacts with the SH2 domains of PTPN11 and SRC. Interacts with APEX1. May interact with ZNF540. Phosphorylated on Tyr residues after EGF stimulation. In terms of processing, dephosphorylated by PTPN11.

The protein localises to the cytoplasm. The protein resides in the nucleus. Its function is as follows. Required for normal vault structure. Vaults are multi-subunit structures that may act as scaffolds for proteins involved in signal transduction. Vaults may also play a role in nucleo-cytoplasmic transport. Down-regulates IFNG-mediated STAT1 signaling and subsequent activation of JAK. Down-regulates SRC activity and signaling through MAP kinases. This is Major vault protein (MVP) from Bos taurus (Bovine).